The chain runs to 295 residues: F-box only protein 6 (295 aa).

One can recognise an F-box domain in the interval 1–48; the sequence is MVHINELPENILLELFIHIPAPQLLRNCRLVCRLWRDLIDVVSLWKRK. The FBA domain maps to 69 to 250; it reads FYILCSLQRN…VTNSSIIISH (182 aa). A phosphoserine mark is found at Ser-249 and Ser-276. Thr-280 is subject to Phosphothreonine.

In terms of assembly, interacts with CHEK1 and CUL1. Part of a SCF (SKP1-cullin-F-box) protein ligase complex. Interacts with VCP. In terms of tissue distribution, present in liver and kidney (at protein level). Widely expressed.

Its subcellular location is the cytoplasm. The protein operates within protein modification; protein ubiquitination. Its function is as follows. Substrate-recognition component of some SCF (SKP1-CUL1-F-box protein)-type E3 ubiquitin ligase complexes. Involved in DNA damage response by specifically recognizing activated CHEK1 (phosphorylated on 'Ser-345'), promoting its ubiquitination and degradation. Ubiquitination of CHEK1 is required to ensure that activated CHEK1 does not accumulate as cells progress through S phase, or when replication forks encounter transient impediments during normal DNA replication. Involved in endoplasmic reticulum-associated degradation pathway (ERAD) for misfolded lumenal proteins by recognizing and binding sugar chains on unfolded glycoproteins that are retrotranslocated into the cytosol and promoting their ubiquitination and subsequent degradation. Able to recognize and bind denatured glycoproteins, which are modified with not only high-mannose but also complex-type oligosaccharides. Also recognizes sulfated glycans. The polypeptide is F-box only protein 6 (Fbxo6) (Mus musculus (Mouse)).